Here is a 483-residue protein sequence, read N- to C-terminus: Dihydrolipoyllysine-residue acetyltransferase component of pyruvate dehydrogenase complex, mitochondrial (483 aa).

A mitochondrion-targeting transit peptide spans 1-28 (MLSANMLRRMHHGVAVTRMLLVSNGKVQ). One can recognise a Lipoyl-binding domain in the interval 53–129 (HTVINMPALS…PVGKPLAVTV (77 aa)). Residue Lys-94 is modified to N6-lipoyllysine. Disordered stretches follow at residues 143 to 187 (IEDS…DRVF) and 234 to 254 (EAAA…APGD). A compositionally biased stretch (basic and acidic residues) spans 146–160 (SSAKEPSAKSGEEKS). Polar residues predominate over residues 161–178 (APSSEKQSKETSSPSNVS). In terms of domain architecture, Peripheral subunit-binding (PSBD) spans 187 to 224 (FASPLARKLAEEKDLDLSQIRGSGPNGRIIKVDIENFK). Residues 235–252 (AAAKATTPAASAADAAAP) show a composition bias toward low complexity. Catalysis depends on residues His-456 and Asp-460.

The protein belongs to the 2-oxoacid dehydrogenase family. It depends on (R)-lipoate as a cofactor.

The protein localises to the mitochondrion matrix. The enzyme catalyses N(6)-[(R)-dihydrolipoyl]-L-lysyl-[protein] + acetyl-CoA = N(6)-[(R)-S(8)-acetyldihydrolipoyl]-L-lysyl-[protein] + CoA. The pyruvate dehydrogenase complex catalyzes the overall conversion of pyruvate to acetyl-CoA and CO(2). It contains multiple copies of three enzymatic components: pyruvate dehydrogenase (E1), dihydrolipoamide acetyltransferase (E2) and lipoamide dehydrogenase (E3). This Schizosaccharomyces pombe (strain 972 / ATCC 24843) (Fission yeast) protein is Dihydrolipoyllysine-residue acetyltransferase component of pyruvate dehydrogenase complex, mitochondrial.